The chain runs to 152 residues: Transcriptional regulator MraZ (152 aa).

SpoVT-AbrB domains are found at residues 5-52 and 81-124; these read ATLV…PLPE and ASEC…DETT.

This sequence belongs to the MraZ family. As to quaternary structure, dodecamer.

The protein localises to the cytoplasm. The protein resides in the nucleoid. In terms of biological role, negatively regulates its own expression and that of the subsequent genes in the proximal part of the division and cell wall (dcw) gene cluster. Acts by binding directly to DNA. May also regulate the expression of genes outside the dcw cluster. This Escherichia coli (strain K12) protein is Transcriptional regulator MraZ.